Here is a 318-residue protein sequence, read N- to C-terminus: E3 ubiquitin-protein ligase NRDP1 (318 aa).

An RING-type; degenerate zinc finger spans residues 18-57 (CPICSGVLEEPVRAPHCEHAFCNACITQWFAQQQICPVDR). The segment at 78-138 (KLQISCDNAG…MPNHNCIKHL (61 aa)) adopts an SIAH-type; degenerate zinc-finger fold.

It catalyses the reaction S-ubiquitinyl-[E2 ubiquitin-conjugating enzyme]-L-cysteine + [acceptor protein]-L-lysine = [E2 ubiquitin-conjugating enzyme]-L-cysteine + N(6)-ubiquitinyl-[acceptor protein]-L-lysine.. It participates in protein modification; protein ubiquitination. Functionally, acts as E3 ubiquitin-protein ligase and regulates the degradation of target proteins. This chain is E3 ubiquitin-protein ligase NRDP1 (rnf41), found in Danio rerio (Zebrafish).